We begin with the raw amino-acid sequence, 30 residues long: GIPCAESCVYIPCTVTALLGCSCSNRVCYN.

The segment at residues 1–30 is a cross-link (cyclopeptide (Gly-Asn)); sequence GIPCAESCVYIPCTVTALLGCSCSNRVCYN. 3 cysteine pairs are disulfide-bonded: C4/C21, C8/C23, and C13/C28.

This is a cyclic peptide. As to expression, expressed in leaves, petals, petioles and roots but not in runners (at protein level).

Functionally, probably participates in a plant defense mechanism. This Viola odorata (Sweet violet) protein is Cycloviolacin-O1.